Reading from the N-terminus, the 395-residue chain is Elongation factor Tu (395 aa).

Positions 10–204 (KPHLNIGTIG…AVDTWIELPE (195 aa)) constitute a tr-type G domain. Residues 19–26 (GHVDHGKT) form a G1 region. 19–26 (GHVDHGKT) provides a ligand contact to GTP. Residue Thr26 participates in Mg(2+) binding. A G2 region spans residues 60–64 (GITIN). A G3 region spans residues 81-84 (DCPG). Residues 81-85 (DCPGH) and 136-139 (NKVD) each bind GTP. The G4 stretch occupies residues 136-139 (NKVD). Residues 174 to 176 (SAL) are G5.

Belongs to the TRAFAC class translation factor GTPase superfamily. Classic translation factor GTPase family. EF-Tu/EF-1A subfamily. In terms of assembly, monomer.

The protein localises to the cytoplasm. The enzyme catalyses GTP + H2O = GDP + phosphate + H(+). GTP hydrolase that promotes the GTP-dependent binding of aminoacyl-tRNA to the A-site of ribosomes during protein biosynthesis. The polypeptide is Elongation factor Tu (Christiangramia forsetii (strain DSM 17595 / CGMCC 1.15422 / KT0803) (Gramella forsetii)).